Here is a 623-residue protein sequence, read N- to C-terminus: Low affinity potassium transport system protein Kup (623 aa).

12 helical membrane passes run 9–29 (LPAI…TSPL), 49–69 (VFGF…FKYL), 101–121 (VLVI…VITP), 137–157 (PSLD…LFMI), 163–183 (GMVG…LAVL), 212–232 (AVSF…EALY), 247–267 (WFSV…ALLL), 276–296 (PFFL…ATLA), 337–357 (IYIP…IVSF), 363–383 (LAAA…ILFA), 395–415 (ILVG…FSAN), and 419–439 (LFSG…IMTT).

Belongs to the HAK/KUP transporter (TC 2.A.72) family.

It is found in the cell inner membrane. The enzyme catalyses K(+)(in) + H(+)(in) = K(+)(out) + H(+)(out). In terms of biological role, responsible for the low-affinity transport of potassium into the cell. Likely operates as a K(+):H(+) symporter. The sequence is that of Low affinity potassium transport system protein Kup from Cronobacter sakazakii (strain ATCC BAA-894) (Enterobacter sakazakii).